We begin with the raw amino-acid sequence, 847 residues long: DNA gyrase subunit A (847 aa).

Residues 34 to 533 (LPDVRDGLKP…NYSDINTSDL (500 aa)) form the Topo IIA-type catalytic domain. Tyr122 functions as the O-(5'-phospho-DNA)-tyrosine intermediate in the catalytic mechanism. The GyrA-box signature appears at 560 to 566 (QKRGGKG).

This sequence belongs to the type II topoisomerase GyrA/ParC subunit family. Heterotetramer, composed of two GyrA and two GyrB chains. In the heterotetramer, GyrA contains the active site tyrosine that forms a transient covalent intermediate with DNA, while GyrB binds cofactors and catalyzes ATP hydrolysis.

Its subcellular location is the cytoplasm. The catalysed reaction is ATP-dependent breakage, passage and rejoining of double-stranded DNA.. A type II topoisomerase that negatively supercoils closed circular double-stranded (ds) DNA in an ATP-dependent manner to modulate DNA topology and maintain chromosomes in an underwound state. Negative supercoiling favors strand separation, and DNA replication, transcription, recombination and repair, all of which involve strand separation. Also able to catalyze the interconversion of other topological isomers of dsDNA rings, including catenanes and knotted rings. Type II topoisomerases break and join 2 DNA strands simultaneously in an ATP-dependent manner. This is DNA gyrase subunit A from Buchnera aphidicola subsp. Baizongia pistaciae (strain Bp).